Consider the following 292-residue polypeptide: MKRILLFVLTNLAVVLVLGVVASLLGVNHYLTGNGLNLGALLGFALVMGFGGAFISLLISKPMAKWSAGVRVIDGSGSPDERWIVETVRKLASQAGIGMPEVGIFDGAPNAFATGAFKNSALVAVSTGLLQGMTREEVEAVIGHEVAHIANGDMVTMTLIQGVMNTFVVFLSRVIGYAVDSALRKNNDSQTGPGMGYYVTTIVLDIALGFVAAIIVAWFSRQREFRADAGAARLMGRRQPMIAALARLGGMQPAQLPKSMAALGIAGGIGQWFSTHPPLEARIAALQNAHQD.

The next 2 helical transmembrane spans lie at 4 to 24 (ILLFVLTNLAVVLVLGVVASL) and 39 to 59 (GALLGFALVMGFGGAFISLLI). His-144 is a binding site for Zn(2+). The active site involves Glu-145. Zn(2+) is bound at residue His-148. The next 2 helical transmembrane spans lie at 159 to 179 (LIQGVMNTFVVFLSRVIGYAV) and 199 to 219 (VTTIVLDIALGFVAAIIVAWF). Glu-224 is a Zn(2+) binding site.

The protein belongs to the peptidase M48B family. The cofactor is Zn(2+).

It is found in the cell inner membrane. The chain is Protease HtpX homolog from Verminephrobacter eiseniae (strain EF01-2).